Reading from the N-terminus, the 475-residue chain is Ribulose bisphosphate carboxylase large chain (475 aa).

A propeptide spanning residues 1–2 (MS) is cleaved from the precursor. At Pro-3 the chain carries N-acetylproline. N6,N6,N6-trimethyllysine is present on Lys-14. Residues Asn-123 and Thr-173 each coordinate substrate. Lys-175 (proton acceptor) is an active-site residue. Lys-177 is a binding site for substrate. Residues Lys-201, Asp-203, and Glu-204 each coordinate Mg(2+). Lys-201 bears the N6-carboxylysine mark. The active-site Proton acceptor is His-294. Substrate is bound by residues Arg-295, His-327, and Ser-379.

The protein belongs to the RuBisCO large chain family. Type I subfamily. Heterohexadecamer of 8 large chains and 8 small chains; disulfide-linked. The disulfide link is formed within the large subunit homodimers. It depends on Mg(2+) as a cofactor. Post-translationally, the disulfide bond which can form in the large chain dimeric partners within the hexadecamer appears to be associated with oxidative stress and protein turnover.

Its subcellular location is the plastid. The protein localises to the chloroplast. It carries out the reaction 2 (2R)-3-phosphoglycerate + 2 H(+) = D-ribulose 1,5-bisphosphate + CO2 + H2O. The catalysed reaction is D-ribulose 1,5-bisphosphate + O2 = 2-phosphoglycolate + (2R)-3-phosphoglycerate + 2 H(+). RuBisCO catalyzes two reactions: the carboxylation of D-ribulose 1,5-bisphosphate, the primary event in carbon dioxide fixation, as well as the oxidative fragmentation of the pentose substrate in the photorespiration process. Both reactions occur simultaneously and in competition at the same active site. This is Ribulose bisphosphate carboxylase large chain from Notothixos subaureus (Golden mistletoe).